The chain runs to 350 residues: 2,5-dihydroxypyridine 5,6-dioxygenase (350 aa).

Residues His265, His318, and Asp320 each contribute to the Fe cation site.

Requires Fe(2+) as cofactor.

It catalyses the reaction 2,5-dihydroxypyridine + O2 = N-formylmaleamate + H(+). It functions in the pathway cofactor degradation; nicotinate degradation. In terms of biological role, catalyzes the dioxygenolytic ring cleavage of 2,5-dihydroxypyridine between carbons 5 and 6 generating N-formylmaleamate in the aerobic nicotinate degradation pathway. The sequence is that of 2,5-dihydroxypyridine 5,6-dioxygenase (nicX) from Pseudomonas putida (strain ATCC 47054 / DSM 6125 / CFBP 8728 / NCIMB 11950 / KT2440).